A 206-amino-acid polypeptide reads, in one-letter code: MLDKLIIEFDKGLRTVFAPAQTLRPHPDTGLEEAGLSDLEKRHALGLMRVNHCGEVCAQALYQGQALTARDPATREALKEAAWEETEHLAWTEKRIAELGGRKSLLNPLWYGGSLAMGITAGLLGDRWNLAFLEETEYQVEAHLNEHLATLPEQDAKSRAIVTQMRDDEHRHAETAHALGAAAMPAPVKGLMHLTSQLMKKTSYHI.

The Fe cation site is built by glutamate 55, glutamate 85, histidine 88, glutamate 137, glutamate 169, and histidine 172.

This sequence belongs to the COQ7 family. The cofactor is Fe cation.

It is found in the cell membrane. The enzyme catalyses a 5-methoxy-2-methyl-3-(all-trans-polyprenyl)benzene-1,4-diol + AH2 + O2 = a 3-demethylubiquinol + A + H2O. Its pathway is cofactor biosynthesis; ubiquinone biosynthesis. Functionally, catalyzes the hydroxylation of 2-nonaprenyl-3-methyl-6-methoxy-1,4-benzoquinol during ubiquinone biosynthesis. This Laribacter hongkongensis (strain HLHK9) protein is 3-demethoxyubiquinol 3-hydroxylase.